A 126-amino-acid polypeptide reads, in one-letter code: Small ribosomal subunit protein uS8 (126 aa).

The protein belongs to the universal ribosomal protein uS8 family. As to quaternary structure, part of the 30S ribosomal subunit. Contacts proteins S5 and S12.

In terms of biological role, one of the primary rRNA binding proteins, it binds directly to 16S rRNA central domain where it helps coordinate assembly of the platform of the 30S subunit. The polypeptide is Small ribosomal subunit protein uS8 (Oleidesulfovibrio alaskensis (strain ATCC BAA-1058 / DSM 17464 / G20) (Desulfovibrio alaskensis)).